Reading from the N-terminus, the 158-residue chain is Protein-export protein SecB (158 aa).

This sequence belongs to the SecB family. As to quaternary structure, homotetramer, a dimer of dimers. One homotetramer interacts with 1 SecA dimer.

The protein resides in the cytoplasm. Its function is as follows. One of the proteins required for the normal export of preproteins out of the cell cytoplasm. It is a molecular chaperone that binds to a subset of precursor proteins, maintaining them in a translocation-competent state. It also specifically binds to its receptor SecA. The polypeptide is Protein-export protein SecB (Pectobacterium atrosepticum (strain SCRI 1043 / ATCC BAA-672) (Erwinia carotovora subsp. atroseptica)).